A 159-amino-acid chain; its full sequence is NADH-quinone oxidoreductase subunit I (159 aa).

2 consecutive 4Fe-4S ferredoxin-type domains span residues 51-80 and 90-119; these read RRYE…IEAD and TRYD…EGPN. [4Fe-4S] cluster is bound by residues cysteine 60, cysteine 63, cysteine 66, cysteine 70, cysteine 99, cysteine 102, cysteine 105, and cysteine 109.

It belongs to the complex I 23 kDa subunit family. In terms of assembly, NDH-1 is composed of 14 different subunits. Subunits NuoA, H, J, K, L, M, N constitute the membrane sector of the complex. The cofactor is [4Fe-4S] cluster.

Its subcellular location is the cell inner membrane. It carries out the reaction a quinone + NADH + 5 H(+)(in) = a quinol + NAD(+) + 4 H(+)(out). In terms of biological role, NDH-1 shuttles electrons from NADH, via FMN and iron-sulfur (Fe-S) centers, to quinones in the respiratory chain. The immediate electron acceptor for the enzyme in this species is believed to be ubiquinone. Couples the redox reaction to proton translocation (for every two electrons transferred, four hydrogen ions are translocated across the cytoplasmic membrane), and thus conserves the redox energy in a proton gradient. This chain is NADH-quinone oxidoreductase subunit I, found in Rickettsia conorii (strain ATCC VR-613 / Malish 7).